We begin with the raw amino-acid sequence, 258 residues long: 3-deoxy-manno-octulosonate cytidylyltransferase (258 aa).

It belongs to the KdsB family.

The protein localises to the cytoplasm. It catalyses the reaction 3-deoxy-alpha-D-manno-oct-2-ulosonate + CTP = CMP-3-deoxy-beta-D-manno-octulosonate + diphosphate. It functions in the pathway nucleotide-sugar biosynthesis; CMP-3-deoxy-D-manno-octulosonate biosynthesis; CMP-3-deoxy-D-manno-octulosonate from 3-deoxy-D-manno-octulosonate and CTP: step 1/1. Its pathway is bacterial outer membrane biogenesis; lipopolysaccharide biosynthesis. In terms of biological role, activates KDO (a required 8-carbon sugar) for incorporation into bacterial lipopolysaccharide in Gram-negative bacteria. The polypeptide is 3-deoxy-manno-octulosonate cytidylyltransferase (Blochmanniella floridana).